A 273-amino-acid polypeptide reads, in one-letter code: Dermonecrotic toxin LdSicTox-alphaIB3avi (273 aa).

Histidine 5 is a catalytic residue. The Mg(2+) site is built by glutamate 25 and aspartate 27. Histidine 41 (nucleophile) is an active-site residue. 2 disulfides stabilise this stretch: cysteine 45-cysteine 51 and cysteine 47-cysteine 190. Aspartate 85 is a Mg(2+) binding site.

This sequence belongs to the arthropod phospholipase D family. Class II subfamily. Requires Mg(2+) as cofactor. As to expression, expressed by the venom gland.

The protein localises to the secreted. It carries out the reaction an N-(acyl)-sphingosylphosphocholine = an N-(acyl)-sphingosyl-1,3-cyclic phosphate + choline. The enzyme catalyses an N-(acyl)-sphingosylphosphoethanolamine = an N-(acyl)-sphingosyl-1,3-cyclic phosphate + ethanolamine. The catalysed reaction is a 1-acyl-sn-glycero-3-phosphocholine = a 1-acyl-sn-glycero-2,3-cyclic phosphate + choline. It catalyses the reaction a 1-acyl-sn-glycero-3-phosphoethanolamine = a 1-acyl-sn-glycero-2,3-cyclic phosphate + ethanolamine. Functionally, dermonecrotic toxins cleave the phosphodiester linkage between the phosphate and headgroup of certain phospholipids (sphingolipid and lysolipid substrates), forming an alcohol (often choline) and a cyclic phosphate. This toxin acts on sphingomyelin (SM). It may also act on ceramide phosphoethanolamine (CPE), lysophosphatidylcholine (LPC) and lysophosphatidylethanolamine (LPE), but not on lysophosphatidylserine (LPS), and lysophosphatidylglycerol (LPG). It acts by transphosphatidylation, releasing exclusively cyclic phosphate products as second products. Induces dermonecrosis, hemolysis, increased vascular permeability, edema, inflammatory response, and platelet aggregation. The polypeptide is Dermonecrotic toxin LdSicTox-alphaIB3avi (Loxosceles deserta (Desert recluse spider)).